Here is a 388-residue protein sequence, read N- to C-terminus: Flavin oxidoreductase hxnT (388 aa).

The protein belongs to the NADH:flavin oxidoreductase/NADH oxidase family. The cofactor is FMN.

Its function is as follows. Flavin oxidoreductase, part of the hnx cluster involved in the purine degradation. The nicotinate hydroxylase hnxS accepts nicotinate as a substrate and catalyzes the first step of nicotinate catabolism. The major facilitator-type transporters hxnP and hxnZ are probably involved in the uptake of nicotinate-derived metabolites, and the oxidoreductases hxnT and hxnY in the further metabolism of 6-OH nicotinic acid. This Emericella nidulans (strain FGSC A4 / ATCC 38163 / CBS 112.46 / NRRL 194 / M139) (Aspergillus nidulans) protein is Flavin oxidoreductase hxnT.